The sequence spans 145 residues: Deoxyuridine 5'-triphosphate nucleotidohydrolase (145 aa).

Residues 65–67 (RSG), N78, 82–84 (TID), and M92 each bind substrate.

The protein belongs to the dUTPase family. It depends on Mg(2+) as a cofactor.

It carries out the reaction dUTP + H2O = dUMP + diphosphate + H(+). The protein operates within pyrimidine metabolism; dUMP biosynthesis; dUMP from dCTP (dUTP route): step 2/2. This enzyme is involved in nucleotide metabolism: it produces dUMP, the immediate precursor of thymidine nucleotides and it decreases the intracellular concentration of dUTP so that uracil cannot be incorporated into DNA. This Chlorobium phaeobacteroides (strain BS1) protein is Deoxyuridine 5'-triphosphate nucleotidohydrolase.